A 995-amino-acid chain; its full sequence is MSSLPRRAKVQVQGVVLKDEFSSFSELSSASEEDDKEDSAWEPQKKVPRSRKQPPPKESKPKRMPQVKKNAPQISDGSEVVVVKEELNSSVAIADTALEDRKNKLNTVQTLKTAKTKRKCAAQPHAVRRTKKLKVDEETSKASYLEGESNSSETPSTSTVWGGTCKKEENDDEFTFGQSPLKKIKTETCPQGQPVKFPANANHIKEEVEMNWDIVQVLSERTNIEPWVCTNTIRLFNDDNTIPFIIRYRKELINNLDADSLREVQQTLEELRAVAKKVHSTIQKIKKEGKMSECLLKAMLNCKTFEELEHVSAPYKTGSKGTKAQRARQLGLEGAARALLEKPGELSLLSYIRPDVKGLSTLQDIEIGAQHILADMIAKDKGTLDFIRNLCQNRHVCIQSSLAKVSSKKVNEKDVDKFLLYQHFSCNIRNIHHHQILAINRGENLKVLTVKVNISDGVKDEFCRWCIQNRWRPRSFARPELMKILRNSLNDSFKRLIYPLLCREFRAKLTSDAEKESVMMFGRNLRQLLLTSPVPGRTLMGVDPGYKHGCKLAIISPTSQILHTDVVYLHCGQGFREAEKIKMLLLNFNCSTVVIGNGTACRETEAYFADLIMKNYFAPLDVVYCIVSEAGASIYSVSPEANKEMPGLDPNLRSAVSIARRVQDPLAELVKIEPKHIGVGMYQHDVSQTLLKATLDSVVEECVSFVGVDINICSEVLLRHIAGLNANRAKNIIEWREKNGPFINREQLKKVKGLGPKSFQQCAGFIRINQDYIQTFCSQQTETSGQIQGVAVTSSADVEVTNEKQGKKKSKTVANVLLKPNPLDQTCIHPESYDIAMRFLSSIGGTLYEIGKPEMQQKINSFLEKEGMEKIAERLQTTVHTLQVIIDGLSQPESFDFRTDFDKPDFKRSIVCLKDLQVGTVLTGKVENATLFGIFVDIGVGKSGLIPIRNVTEAKLSKTKKRRSLGLGPGERVEVQVLNIDIPRSRITLDLIRVL.

The disordered stretch occupies residues 23–78 (SFSELSSASEEDDKEDSAWEPQKKVPRSRKQPPPKESKPKRMPQVKKNAPQISDGS). Lys-84 participates in a covalent cross-link: Glycyl lysine isopeptide (Lys-Gly) (interchain with G-Cter in SUMO2). The segment covering 116–132 (TKRKCAAQPHAVRRTKK) has biased composition (basic residues). The interval 116 to 164 (TKRKCAAQPHAVRRTKKLKVDEETSKASYLEGESNSSETPSTSTVWGGT) is disordered. Residue Lys-134 forms a Glycyl lysine isopeptide (Lys-Gly) (interchain with G-Cter in SUMO2) linkage. The segment covering 146-159 (EGESNSSETPSTST) has biased composition (low complexity). Glycyl lysine isopeptide (Lys-Gly) (interchain with G-Cter in SUMO2) cross-links involve residues Lys-166, Lys-167, and Lys-183. Lys-185 is covalently cross-linked (Glycyl lysine isopeptide (Lys-Gly) (interchain with G-Cter in SUMO1); alternate). Residue Lys-185 forms a Glycyl lysine isopeptide (Lys-Gly) (interchain with G-Cter in SUMO2); alternate linkage. A coiled-coil region spans residues 258 to 288 (ADSLREVQQTLEELRAVAKKVHSTIQKIKKE). Position 861 is a phosphoserine (Ser-861). The 74-residue stretch at 919-992 (GTVLTGKVEN…PRSRITLDLI (74 aa)) folds into the S1 motif domain. Lys-955 participates in a covalent cross-link: Glycyl lysine isopeptide (Lys-Gly) (interchain with G-Cter in SUMO2). Residue Ser-964 is modified to Phosphoserine.

The sequence is that of S1 RNA-binding domain-containing protein 1 (SRBD1) from Pongo abelii (Sumatran orangutan).